A 684-amino-acid chain; its full sequence is MSAAGILAFAQQGWEQVLAKVKWSVVYLDAACAESLHWSCGSSRLLEAVKGPACHLREFEPQAIGGGAKQPRAVFVLSSPLKGRIVDTLQSIICRSHFQHCVVVTAVSHAVHLTANHVPAAAAAELEGQQPVFEQLEEKLCEWMGNENYTAEVLHVPLFLAPVASHLAFTPAFATLFPLLPQDVHALNSARPDKRRLSSLGEVDATALTPELLLYIRCLVSGLSSLCEHLGVREECFAVGPLSRVIATDLANYAPAKNRKKTATGRASVVFVDRTLDLTGAVGHHGDNLVEKIMSVLPQLPGHTHDVMVNMAELTAVQAVEENQNVIAPGCLAPSNEASAKALWEALLNSKHKEAVMEVRRHLVEAASRENLPIKMSMGRVTPGQLMSYIQLFKNNLRALRNHCGLLQLGMATVQTLKHPQTAKWDNFLAFERLLLQSLGDSTMAGVLNQLLPMIKSSSQRTSDDLNPEELLILLIYIYSVPGDVTLDRDLGDVEEKVKKALAHVLSEESELSPLLQKITGCDSAVDLTLPKSQIAVNDVFMALREIAGARNLMRQFKSVYVPGNNTHQASYKPLLKQVVEEIFNPEKSDPIDIEHMSSGLTDLLKTGFSMFMKVSRPHPSDHPLLILFVVGGVTVAEAKMVKDLVASLKPGTQVMVLSTRLLKPLNIPELLFATDRLHPDLGF.

This sequence belongs to the STXBP/unc-18/SEC1 family.

Functionally, may be involved in protein transport. This chain is Sec1 family domain-containing protein 2 (Scfd2), found in Mus musculus (Mouse).